Consider the following 142-residue polypeptide: Large ribosomal subunit protein bL17 (142 aa).

The protein belongs to the bacterial ribosomal protein bL17 family. As to quaternary structure, part of the 50S ribosomal subunit. Contacts protein L32.

This chain is Large ribosomal subunit protein bL17, found in Chlamydia felis (strain Fe/C-56) (Chlamydophila felis).